The following is a 396-amino-acid chain: 1-deoxy-D-xylulose 5-phosphate reductoisomerase (396 aa).

NADPH-binding residues include Thr13, Gly14, Ser15, Val16, and Asn127. Residue Lys128 coordinates 1-deoxy-D-xylulose 5-phosphate. Residue Glu129 coordinates NADPH. Asp153 is a binding site for Mn(2+). Residues Ser154, Glu155, Ser184, and His207 each contribute to the 1-deoxy-D-xylulose 5-phosphate site. Residue Glu155 participates in Mn(2+) binding. Position 213 (Gly213) interacts with NADPH. 1-deoxy-D-xylulose 5-phosphate is bound by residues Ser220, Asn225, Lys226, and Glu229. Mn(2+) is bound at residue Glu229.

It belongs to the DXR family. Mg(2+) is required as a cofactor. Mn(2+) serves as cofactor.

It catalyses the reaction 2-C-methyl-D-erythritol 4-phosphate + NADP(+) = 1-deoxy-D-xylulose 5-phosphate + NADPH + H(+). Its pathway is isoprenoid biosynthesis; isopentenyl diphosphate biosynthesis via DXP pathway; isopentenyl diphosphate from 1-deoxy-D-xylulose 5-phosphate: step 1/6. Its function is as follows. Catalyzes the NADPH-dependent rearrangement and reduction of 1-deoxy-D-xylulose-5-phosphate (DXP) to 2-C-methyl-D-erythritol 4-phosphate (MEP). This is 1-deoxy-D-xylulose 5-phosphate reductoisomerase from Pseudomonas fluorescens (strain SBW25).